The following is a 139-amino-acid chain: Large ribosomal subunit protein uL16 (139 aa).

Positions 1–16 (MLIPKRTKYRKQHRPD) are enriched in basic residues. The interval 1 to 23 (MLIPKRTKYRKQHRPDRHGMSKG) is disordered.

The protein belongs to the universal ribosomal protein uL16 family. In terms of assembly, part of the 50S ribosomal subunit.

In terms of biological role, binds 23S rRNA and is also seen to make contacts with the A and possibly P site tRNAs. The chain is Large ribosomal subunit protein uL16 from Bifidobacterium animalis subsp. lactis (strain AD011).